Reading from the N-terminus, the 143-residue chain is MRILGLDVGSRTVGVSVSDPMGWTAQGVEIIRINEDEKEFGIDRLGEIIKEKNATGVVLGLPKNMNNSEGPRAEASRNYAKLIEKTFGLPTDFQDERLTTVEAERMLIEEANISRKKRKKVIDKIAAEFILQNYLDSKGKLTK.

The protein belongs to the YqgF nuclease family.

The protein resides in the cytoplasm. Could be a nuclease involved in processing of the 5'-end of pre-16S rRNA. This Leuconostoc mesenteroides subsp. mesenteroides (strain ATCC 8293 / DSM 20343 / BCRC 11652 / CCM 1803 / JCM 6124 / NCDO 523 / NBRC 100496 / NCIMB 8023 / NCTC 12954 / NRRL B-1118 / 37Y) protein is Putative pre-16S rRNA nuclease.